The primary structure comprises 302 residues: Succinate--CoA ligase [ADP-forming] subunit alpha (302 aa).

CoA is bound by residues 17–20 (TGST), Lys-43, and 96–98 (ITE). Tyr-159 contacts substrate. The Tele-phosphohistidine intermediate role is filled by His-247.

It belongs to the succinate/malate CoA ligase alpha subunit family. As to quaternary structure, heterotetramer of two alpha and two beta subunits.

It carries out the reaction succinate + ATP + CoA = succinyl-CoA + ADP + phosphate. The enzyme catalyses GTP + succinate + CoA = succinyl-CoA + GDP + phosphate. Its pathway is carbohydrate metabolism; tricarboxylic acid cycle; succinate from succinyl-CoA (ligase route): step 1/1. Succinyl-CoA synthetase functions in the citric acid cycle (TCA), coupling the hydrolysis of succinyl-CoA to the synthesis of either ATP or GTP and thus represents the only step of substrate-level phosphorylation in the TCA. The alpha subunit of the enzyme binds the substrates coenzyme A and phosphate, while succinate binding and nucleotide specificity is provided by the beta subunit. In Staphylococcus aureus (strain MSSA476), this protein is Succinate--CoA ligase [ADP-forming] subunit alpha.